The chain runs to 485 residues: Aldehyde dehydrogenase family 3 member A2 (485 aa).

The Cytoplasmic portion of the chain corresponds to 1–463; the sequence is MELEVRRVRQ…FLLKRFNKEK (463 aa). 185–190 provides a ligand contact to NAD(+); sequence GNTAVG. Active-site residues include Glu-207 and Cys-241. Residue Ser-293 is modified to Phosphoserine. A helical membrane pass occupies residues 464-484; it reads LGLLLLTFLGIVAAVLVKAEY. The Prevents secretion from ER motif lies at 481 to 484; it reads KAEY.

Belongs to the aldehyde dehydrogenase family. Homodimer.

The protein resides in the microsome membrane. The protein localises to the endoplasmic reticulum membrane. It carries out the reaction an aldehyde + NAD(+) + H2O = a carboxylate + NADH + 2 H(+). The catalysed reaction is a fatty aldehyde + NAD(+) + H2O = a fatty acid + NADH + 2 H(+). The enzyme catalyses (2E)-hexadecenal + NAD(+) + H2O = (E)-hexadec-2-enoate + NADH + 2 H(+). It catalyses the reaction hexadecanoate + NADH + 2 H(+) = hexadecanal + NAD(+) + H2O. It carries out the reaction 22-oxodocosanoate + NAD(+) + H2O = docosanedioate + NADH + 2 H(+). The catalysed reaction is 2,6,10,14-tetramethylpentadecanal + NAD(+) + H2O = 2,6,10,14-tetramethylpentadecanoate + NADH + 2 H(+). The enzyme catalyses octadecanal + NAD(+) + H2O = octadecanoate + NADH + 2 H(+). It catalyses the reaction dodecanoate + NADH + 2 H(+) = dodecanal + NAD(+) + H2O. It carries out the reaction decanal + NAD(+) + H2O = decanoate + NADH + 2 H(+). The catalysed reaction is tetradecanal + NAD(+) + H2O = tetradecanoate + NADH + 2 H(+). The enzyme catalyses octanal + NAD(+) + H2O = octanoate + NADH + 2 H(+). It catalyses the reaction heptanal + NAD(+) + H2O = heptanoate + NADH + 2 H(+). It carries out the reaction (2E,6E)-farnesal + NAD(+) + H2O = (2E,6E)-farnesoate + NADH + 2 H(+). In terms of biological role, catalyzes the oxidation of medium and long-chain aliphatic aldehydes to fatty acids. Active on a variety of saturated and unsaturated aliphatic aldehydes between 6 and 24 carbons in length. Responsible for conversion of the sphingosine 1-phosphate (S1P) degradation product hexadecenal to hexadecenoic acid. This is Aldehyde dehydrogenase family 3 member A2 (ALDH3A2) from Pongo abelii (Sumatran orangutan).